A 1162-amino-acid chain; its full sequence is DNA-directed RNA polymerase subunit beta (1162 aa).

Belongs to the RNA polymerase beta chain family. The RNAP catalytic core consists of 2 alpha, 1 beta, 1 beta' and 1 omega subunit. When a sigma factor is associated with the core the holoenzyme is formed, which can initiate transcription.

It catalyses the reaction RNA(n) + a ribonucleoside 5'-triphosphate = RNA(n+1) + diphosphate. Functionally, DNA-dependent RNA polymerase catalyzes the transcription of DNA into RNA using the four ribonucleoside triphosphates as substrates. In Clavibacter sepedonicus (Clavibacter michiganensis subsp. sepedonicus), this protein is DNA-directed RNA polymerase subunit beta.